The chain runs to 380 residues: Cytochrome b (380 aa).

The next 4 membrane-spanning stretches (helical) occupy residues 34-54 (FGSLLGICLTTQILTGLLLAA), 78-99 (WLIRNLHANGASFFFICIYMHV), 114-134 (WNTGVILLLTLMATAFVGYVL), and 179-199 (FFTLHFLLPFMIMGLTLIHLT). His84 and His98 together coordinate heme b. Heme b contacts are provided by His183 and His197. His202 contacts a ubiquinone. A run of 4 helical transmembrane segments spans residues 227–247 (LKDILGFMLMFLPLMTLALFS), 289–309 (LGGVLALAASMLVLFLAPLLH), 321–341 (LSQLLFWTLTANLLILTWVGS), and 348–368 (FMIIGQLASLTYFTILLILFP).

Belongs to the cytochrome b family. In terms of assembly, the cytochrome bc1 complex contains 11 subunits: 3 respiratory subunits (MT-CYB, CYC1 and UQCRFS1), 2 core proteins (UQCRC1 and UQCRC2) and 6 low-molecular weight proteins (UQCRH/QCR6, UQCRB/QCR7, UQCRQ/QCR8, UQCR10/QCR9, UQCR11/QCR10 and a cleavage product of UQCRFS1). This cytochrome bc1 complex then forms a dimer. Heme b serves as cofactor.

Its subcellular location is the mitochondrion inner membrane. Functionally, component of the ubiquinol-cytochrome c reductase complex (complex III or cytochrome b-c1 complex) that is part of the mitochondrial respiratory chain. The b-c1 complex mediates electron transfer from ubiquinol to cytochrome c. Contributes to the generation of a proton gradient across the mitochondrial membrane that is then used for ATP synthesis. This chain is Cytochrome b (MT-CYB), found in Balearica pavonina (Black crowned-crane).